The chain runs to 327 residues: Ribose-phosphate pyrophosphokinase (327 aa).

ATP contacts are provided by residues Asp40 to Glu42 and Arg99 to Gln100. Positions 134 and 173 each coordinate Mg(2+). Lys196 is an active-site residue. Residues Arg198, Asp222, and Asp226–Thr230 each bind D-ribose 5-phosphate.

This sequence belongs to the ribose-phosphate pyrophosphokinase family. Class I subfamily. In terms of assembly, homohexamer. Requires Mg(2+) as cofactor.

It localises to the cytoplasm. The catalysed reaction is D-ribose 5-phosphate + ATP = 5-phospho-alpha-D-ribose 1-diphosphate + AMP + H(+). The protein operates within metabolic intermediate biosynthesis; 5-phospho-alpha-D-ribose 1-diphosphate biosynthesis; 5-phospho-alpha-D-ribose 1-diphosphate from D-ribose 5-phosphate (route I): step 1/1. Functionally, involved in the biosynthesis of the central metabolite phospho-alpha-D-ribosyl-1-pyrophosphate (PRPP) via the transfer of pyrophosphoryl group from ATP to 1-hydroxyl of ribose-5-phosphate (Rib-5-P). The sequence is that of Ribose-phosphate pyrophosphokinase from Neisseria meningitidis serogroup A / serotype 4A (strain DSM 15465 / Z2491).